Here is a 335-residue protein sequence, read N- to C-terminus: E3 ubiquitin ligase rnf-121 (335 aa).

The Cytoplasmic segment spans residues 1-47 (MGQHGAIRLQNEVQEGMPPPHELTEEEQWAEEHRKMHEKHKGHEAMH). The helical transmembrane segment at 48–68 (MEMMVIFMISVIVGQIFLVTW) threads the bilayer. Residues 69-72 (KRKH) are Lumenal-facing. Residues 73 to 93 (FKSYQMCTLIGMLTIPVYVCF) traverse the membrane as a helical segment. The Cytoplasmic segment spans residues 94 to 99 (NRSWYR). A helical transmembrane segment spans residues 100 to 120 (FLATWLVFCIFSAFIWLKASA). Over 121–143 (QHISGGTPRFVYKWFLFLHKLSY) the chain is Lumenal. The chain crosses the membrane as a helical span at residues 144–164 (VLGVVGYLIMMGALLGFHVLF). The Cytoplasmic segment spans residues 165–168 (GVSQ). Residues 169-189 (PTLMDAGILFMFYGVYYGVLG) form a helical membrane-spanning segment. At 190–335 (RDFAHICTAR…QGLTTWMGLE (146 aa)) the chain is on the lumenal side. The segment at 222–284 (CAVCGGRLDD…GKLQTCPYCK (63 aa)) adopts an RING-type; atypical zinc-finger fold.

The protein belongs to the RNF121 family. In terms of tissue distribution, expressed in body wall muscles, the hypodermis, seam cells, vulval cells, spermathecal cells, uterine cells and the distal tip cell (at protein level).

The protein resides in the endoplasmic reticulum membrane. Its subcellular location is the golgi apparatus membrane. The catalysed reaction is S-ubiquitinyl-[E2 ubiquitin-conjugating enzyme]-L-cysteine + [acceptor protein]-L-lysine = [E2 ubiquitin-conjugating enzyme]-L-cysteine + N(6)-ubiquitinyl-[acceptor protein]-L-lysine.. The protein operates within protein modification; protein ubiquitination. E3 ubiquitin ligase which accepts ubiquitin and transfers it to substrates such as the beta-integrin subunit pat-3, promoting their degradation by the endoplasmic reticulum-associated degradation (ERAD) pathway which is a pathway involved in ubiquitin-dependent degradation of misfolded endoplasmic reticulum proteins. Negatively regulates the unfolded protein response to reduce endoplasmic reticulum stress. Required for the cessation of distal tip cell migration at the end of larval morphogenesis. Plays a role in germline and gonad development. This chain is E3 ubiquitin ligase rnf-121, found in Caenorhabditis elegans.